The chain runs to 85 residues: UPF0434 protein HNE_3545 (85 aa).

This sequence belongs to the UPF0434 family.

This is UPF0434 protein HNE_3545 from Hyphomonas neptunium (strain ATCC 15444).